The following is a 428-amino-acid chain: Ribulose bisphosphate carboxylase (428 aa).

Lys-151 functions as the Proton acceptor in the catalytic mechanism. Residue Lys-153 coordinates substrate. Mg(2+) is bound by residues Lys-177, Asp-179, and Glu-180. Lys-177 carries the post-translational modification N6-carboxylysine. The active-site Proton acceptor is His-270. Residues Arg-271, His-303, 354-356 (SGG), and 376-379 (QFGG) contribute to the substrate site.

It belongs to the RuBisCO large chain family. Type III subfamily. In terms of assembly, homodimer or homodecamer. In contrast to form I RuBisCO, the form III RuBisCO is composed solely of large subunits. Mg(2+) serves as cofactor.

The enzyme catalyses 2 (2R)-3-phosphoglycerate + 2 H(+) = D-ribulose 1,5-bisphosphate + CO2 + H2O. The catalysed reaction is D-ribulose 1,5-bisphosphate + O2 = 2-phosphoglycolate + (2R)-3-phosphoglycerate + 2 H(+). Catalyzes the addition of molecular CO(2) and H(2)O to ribulose 1,5-bisphosphate (RuBP), generating two molecules of 3-phosphoglycerate (3-PGA). Functions in an archaeal AMP degradation pathway, together with AMP phosphorylase and R15P isomerase. This is Ribulose bisphosphate carboxylase from Methanosarcina mazei (strain ATCC BAA-159 / DSM 3647 / Goe1 / Go1 / JCM 11833 / OCM 88) (Methanosarcina frisia).